The sequence spans 180 residues: Fucolectin-2 (180 aa).

Positions 1-22 (MKVKMIMLLFQILAILTLKSDS) are cleaved as a signal peptide. The segment at 31-179 (QENVALRGRA…VEVNVLFPAP (149 aa)) is F5/8 type C-like. Residues Asn-58, Asp-61, Asn-63, and Ser-72 each contribute to the Ca(2+) site. Intrachain disulfides connect Cys-73/Cys-168, Cys-104/Cys-105, and Cys-130/Cys-146. Residues His-75 and Arg-101 each coordinate alpha-L-fucose. The Cell attachment site signature appears at 101–103 (RGD). Arg-108 provides a ligand contact to alpha-L-fucose. Residues Cys-168 and Glu-169 each contribute to the Ca(2+) site.

This sequence belongs to the fucolectin family. As to quaternary structure, homotrimer. In terms of tissue distribution, parenchymal hepatocytes.

It localises to the secreted. Its subcellular location is the extracellular space. Acts as a defensive agent. Recognizes blood group fucosylated oligosaccharides including A, B, H and Lewis B-type antigens. Does not recognize Lewis A antigen and has low affinity for monovalent haptens. The chain is Fucolectin-2 from Anguilla japonica (Japanese eel).